The primary structure comprises 486 residues: Vacuolar protein sorting-associated protein 73 (486 aa).

Residues 1–26 (MNRILSSASLLSNVSMPRQNKHKITK) are Cytoplasmic-facing. A helical transmembrane segment spans residues 27–47 (ALCYAIIVASIGSIQFGYHLS). Topologically, residues 48-90 (ELNAPQQVLSCSEFDIPMEGYPYDRTWLGKRGYKQCIPLNDEQ) are mitochondrial intermembrane. The chain crosses the membrane as a helical span at residues 91 to 111 (IGIVTSVFCIGGILGSYFATS). Over 112–119 (LANIYGRK) the chain is Cytoplasmic. The chain crosses the membrane as a helical span at residues 120–140 (FSSLINCTLNIVGSLIIFNSN). Over 141 to 146 (SYRGLI) the chain is Mitochondrial intermembrane. Residues 147 to 167 (IGRILVGISCGSLIVIIPLFI) traverse the membrane as a helical segment. Residues 168-178 (KEVAPSGWEGL) lie on the Cytoplasmic side of the membrane. Residues 179-199 (LGSMTQICIRLGVLLTQGIAL) form a helical membrane-spanning segment. At 200–208 (PLTDSYRWR) the chain is on the mitochondrial intermembrane side. A helical transmembrane segment spans residues 209 to 229 (WILFGSFLIAVLNFFMWFIVD). Topologically, residues 230–305 (ESPKWLLAHG…RDRTNVKSRH (76 aa)) are cytoplasmic. Residues 306 to 326 (VITVLLFGQQFCGINSIVLYG) form a helical membrane-spanning segment. The Mitochondrial intermembrane segment spans residues 327–342 (TKIISQLYPQHAIRIN). The chain crosses the membrane as a helical span at residues 343 to 363 (FFISMVNVLVTILVSLLIHSL). Residues 364-366 (PRK) lie on the Cytoplasmic side of the membrane. A helical membrane pass occupies residues 367 to 387 (PLLMTSTVLVSVTAFIMGIAM). Topologically, residues 388-396 (NHNKMNLLI) are mitochondrial intermembrane. Residues 397 to 417 (VFSFIYMGVFTMGLNPLPFII) form a helical membrane-spanning segment. Over 418-432 (MREVSKPQDMVLAQR) the chain is Cytoplasmic. A helical transmembrane segment spans residues 433-453 (YGTICNWVGTFIIAYTFPIIH). Aspartate 454 is a topological domain (mitochondrial intermembrane). A helical transmembrane segment spans residues 455–475 (VLSGYVFIIFAIIACSISAFI). The Cytoplasmic portion of the chain corresponds to 476-486 (WKKVPETKRSG).

The protein belongs to the major facilitator superfamily. Sugar transporter (TC 2.A.1.1) family.

The protein localises to the mitochondrion membrane. May be involved in vacuolar protein sorting. This is Vacuolar protein sorting-associated protein 73 (VPS73) from Saccharomyces cerevisiae (strain ATCC 204508 / S288c) (Baker's yeast).